Reading from the N-terminus, the 188-residue chain is Putative protein SSX9 (188 aa).

One can recognise a KRAB-related domain in the interval 20–83 (KIQKAFDDIA…TGATDLQGND (64 aa)). Residues 114-165 (KKPAEVGNDSKEVPEASGLQNDGKQLCPPGKPTTSEKINKASGPKRGKHAWT) are disordered. Residues 115-127 (KPAEVGNDSKEVP) are compositionally biased toward basic and acidic residues. Position 123 is a phosphoserine (Ser123). The segment covering 156 to 165 (GPKRGKHAWT) has biased composition (basic residues).

Belongs to the SSX family. In terms of tissue distribution, not detected in any normal or tumor tissues.

In terms of biological role, could act as a modulator of transcription. This chain is Putative protein SSX9, found in Homo sapiens (Human).